A 331-amino-acid polypeptide reads, in one-letter code: NADH-cytochrome b5 reductase 2 (331 aa).

The helical transmembrane segment at 36-56 (VGILIASAVGMAGFGTYFMFG) threads the bilayer. Residues 80-185 (KGFVSLQLDD…KGPLPKYEWS (106 aa)) form the FAD-binding FR-type domain. 188–223 (KHPHVAMIAGGTGITPMYQIMRAIFKNPADKTKVTL) contacts FAD.

It belongs to the flavoprotein pyridine nucleotide cytochrome reductase family. The cofactor is FAD.

Its subcellular location is the mitochondrion outer membrane. The enzyme catalyses 2 Fe(III)-[cytochrome b5] + NADH = 2 Fe(II)-[cytochrome b5] + NAD(+) + H(+). In terms of biological role, may mediate the reduction of outer membrane cytochrome b5. The protein is NADH-cytochrome b5 reductase 2 (MCR1) of Pyricularia oryzae (strain 70-15 / ATCC MYA-4617 / FGSC 8958) (Rice blast fungus).